We begin with the raw amino-acid sequence, 452 residues long: tRNA modification GTPase MnmE (452 aa).

Positions 21, 82, and 121 each coordinate (6S)-5-formyl-5,6,7,8-tetrahydrofolate. Residues 214–372 form the TrmE-type G domain; the sequence is GARVVLVGRP…LAKTIATTLL (159 aa). Position 224 (Asn-224) interacts with K(+). Residues 224 to 229, 243 to 249, 268 to 271, and 353 to 355 contribute to the GTP site; these read NVGKSS, TPIPGTT, DTAG, and SAR. Mg(2+) is bound at residue Ser-228. K(+)-binding residues include Thr-243, Ile-245, and Thr-248. Thr-249 lines the Mg(2+) pocket. Lys-452 contacts (6S)-5-formyl-5,6,7,8-tetrahydrofolate.

Belongs to the TRAFAC class TrmE-Era-EngA-EngB-Septin-like GTPase superfamily. TrmE GTPase family. As to quaternary structure, homodimer. Heterotetramer of two MnmE and two MnmG subunits. It depends on K(+) as a cofactor.

It is found in the cytoplasm. Its function is as follows. Exhibits a very high intrinsic GTPase hydrolysis rate. Involved in the addition of a carboxymethylaminomethyl (cmnm) group at the wobble position (U34) of certain tRNAs, forming tRNA-cmnm(5)s(2)U34. The sequence is that of tRNA modification GTPase MnmE from Chloroflexus aurantiacus (strain ATCC 29366 / DSM 635 / J-10-fl).